The chain runs to 73 residues: Large ribosomal subunit protein bL28 (73 aa).

It belongs to the bacterial ribosomal protein bL28 family.

The polypeptide is Large ribosomal subunit protein bL28 (Anaeromyxobacter dehalogenans (strain 2CP-1 / ATCC BAA-258)).